The following is a 265-amino-acid chain: Translation initiation factor 2 subunit alpha (265 aa).

In terms of domain architecture, S1 motif spans 12–82; sequence GELVIGTVKK…KMRVVEVSLK (71 aa).

The protein belongs to the eIF-2-alpha family. Heterotrimer composed of an alpha, a beta and a gamma chain.

Functionally, eIF-2 functions in the early steps of protein synthesis by forming a ternary complex with GTP and initiator tRNA. The polypeptide is Translation initiation factor 2 subunit alpha (Pyrobaculum aerophilum (strain ATCC 51768 / DSM 7523 / JCM 9630 / CIP 104966 / NBRC 100827 / IM2)).